Reading from the N-terminus, the 367-residue chain is Apolipoprotein A-V (367 aa).

Positions 1–20 are cleaved as a signal peptide; the sequence is MAAVITWALALLSVFATVQA. A Phosphoserine modification is found at S52. A coiled-coil region spans residues 231 to 255; it reads TRKAKDLHTSIQRNLDQLRDELSTF. The interval 305-332 is disordered; the sequence is EEIQHQLAPPPPSHSAFAPELGHSDSNK.

It belongs to the apolipoprotein A1/A4/E family. In terms of assembly, interacts with GPIHBP1. Interacts with SORL1; this interaction leads to APOA5 internalization and sorting either to lysosomes and degradation, or to the trans-Golgi network. Phosphorylated by FAM20C in the extracellular medium. In terms of tissue distribution, liver.

The protein resides in the secreted. The protein localises to the early endosome. It localises to the late endosome. It is found in the golgi apparatus. Its subcellular location is the trans-Golgi network. Functionally, minor apolipoprotein mainly associated with HDL and to a lesser extent with VLDL. May also be associated with chylomicrons. Important determinant of plasma triglyceride (TG) levels by both being a potent stimulator of apo-CII lipoprotein lipase (LPL) TG hydrolysis and an inhibitor of the hepatic VLDL-TG production rate (without affecting the VLDL-apoB production rate). Activates poorly lecithin:cholesterol acyltransferase (LCAT) and does not enhance efflux of cholesterol from macrophages. Binds heparin. This Rattus norvegicus (Rat) protein is Apolipoprotein A-V (Apoa5).